Reading from the N-terminus, the 452-residue chain is MATTSRRFTTGLFASITSVKSHSANRPQSISLIRRNHIDHRLPLIVPSSRRWIIQAARSWDGFDDGAEAEIKKPGAYGYAIGDNEIEGSSSSTVHVIDGEHVKTAEIVIWAAVTAAFGVGNRVMYKLALVPLKEYPFFLAQLSTFGYVAVYYTILYFRYRAGTVTDAMLSVPKSPFLIVGILEALAAAAGMAAAANLSGPSTTVLSQTFLVWQIFFSIIFLGRRYSVNQILGCTLVALGVIVSVASGSGAAHSLNEAGVLWILLMVLSFLLQGAGTVLKEVIFIDSQRRLKGASLDLFIVNSYGSAFQAICIALLLPFLSKLWGIPFNQLGTYLKDGAVCFLNNGTITKGCDGAPFLPLLFVIMNIGYNIALLRLLKISSAVVSCLASTVSVPIAVFLFTMPLPYLGVASSLPKGFMGGTIILVLGMILYSWTPHGANSSHTDSVIPSPPPT.

The N-terminal 34 residues, 1 to 34 (MATTSRRFTTGLFASITSVKSHSANRPQSISLIR), are a transit peptide targeting the chloroplast. The next 10 membrane-spanning stretches (helical) occupy residues 105 to 125 (AEIV…RVMY), 137 to 157 (FFLA…ILYF), 175 to 195 (PFLI…AAAA), 202 to 222 (TTVL…IFLG), 230 to 250 (ILGC…GSGA), 258 to 278 (GVLW…GTVL), 307 to 327 (FQAI…GIPF), 353 to 373 (GAPF…IALL), 389 to 409 (TVSV…LGVA), and 412 to 432 (LPKG…LYSW).

The protein belongs to the CRT-like transporter family.

Its subcellular location is the plastid. The protein localises to the chloroplast membrane. Functionally, involved in thiol transport from the plastid to the cytosol. Transports probably both glutathione (GSH) and its precursor, gamma-glutamylcysteine (gamma-EC). Exhibits some functional redundancy with CLT1 in maintaining the root GSH pool. The sequence is that of Protein CLT3, chloroplastic from Arabidopsis thaliana (Mouse-ear cress).